The chain runs to 161 residues: Cysteine dioxygenase (161 aa).

The Fe cation site is built by His75, His77, and His125.

Belongs to the cysteine dioxygenase family. The cofactor is Fe cation.

The enzyme catalyses L-cysteine + O2 = 3-sulfino-L-alanine + H(+). The sequence is that of Cysteine dioxygenase (cdoA) from Bacillus subtilis (strain 168).